We begin with the raw amino-acid sequence, 301 residues long: D-alanine--D-alanine ligase (301 aa).

The region spanning 99–293 (KRILAFGNVR…FEELLDTIIE (195 aa)) is the ATP-grasp domain. 126 to 181 (IENLGYPVFIKPNNGGSSVATTLVESKEAVKDAVLEALKYDTEVMIEEYIKGDEIT) contacts ATP. Mg(2+) contacts are provided by aspartate 248, glutamate 260, and asparagine 262.

It belongs to the D-alanine--D-alanine ligase family. Mg(2+) is required as a cofactor. It depends on Mn(2+) as a cofactor.

It is found in the cytoplasm. It carries out the reaction 2 D-alanine + ATP = D-alanyl-D-alanine + ADP + phosphate + H(+). Its pathway is cell wall biogenesis; peptidoglycan biosynthesis. In terms of biological role, cell wall formation. The sequence is that of D-alanine--D-alanine ligase from Clostridium perfringens (strain SM101 / Type A).